The sequence spans 383 residues: Succinyl-diaminopimelate desuccinylase (383 aa).

Histidine 69 lines the Zn(2+) pocket. Residue aspartate 71 is part of the active site. Aspartate 103 lines the Zn(2+) pocket. Glutamate 137 acts as the Proton acceptor in catalysis. 3 residues coordinate Zn(2+): glutamate 138, glutamate 166, and histidine 357.

This sequence belongs to the peptidase M20A family. DapE subfamily. In terms of assembly, homodimer. Zn(2+) serves as cofactor. It depends on Co(2+) as a cofactor.

The enzyme catalyses N-succinyl-(2S,6S)-2,6-diaminopimelate + H2O = (2S,6S)-2,6-diaminopimelate + succinate. The protein operates within amino-acid biosynthesis; L-lysine biosynthesis via DAP pathway; LL-2,6-diaminopimelate from (S)-tetrahydrodipicolinate (succinylase route): step 3/3. Catalyzes the hydrolysis of N-succinyl-L,L-diaminopimelic acid (SDAP), forming succinate and LL-2,6-diaminopimelate (DAP), an intermediate involved in the bacterial biosynthesis of lysine and meso-diaminopimelic acid, an essential component of bacterial cell walls. The sequence is that of Succinyl-diaminopimelate desuccinylase from Rickettsia prowazekii (strain Madrid E).